Reading from the N-terminus, the 2157-residue chain is Polyketide synthase 2 (2157 aa).

Residues 7-244 (FIFGDQTGGF…IPIPIWAPYH (238 aa)) are N-terminal acylcarrier protein transacylase domain (SAT). The Ketosynthase family 3 (KS3) domain occupies 374–807 (DAKIAIIGMS…GGNSALLLED (434 aa)). Catalysis depends on for beta-ketoacyl synthase activity residues C546, H681, and H723. The malonyl-CoA:ACP transacylase (MAT) domain stretch occupies residues 908–1213 (GFVFSGQGAQ…ASLHRKDDGW (306 aa)). S998 functions as the For acyl/malonyl transferase activity in the catalytic mechanism. Positions 1290–1605 (TSSVQKIIQQ…RSLLNKVLPP (316 aa)) are product template (PT) domain. An N-terminal hotdog fold region spans residues 1294–1428 (QKIIQQTDGP…CLLCFADPNS (135 aa)). Residues 1294–1600 (QKIIQQTDGP…FLGMSRSLLN (307 aa)) enclose the PKS/mFAS DH domain. H1327 functions as the Proton acceptor; for dehydratase activity in the catalytic mechanism. The segment at 1455–1600 (TDSLLSKGIV…FLGMSRSLLN (146 aa)) is C-terminal hotdog fold. D1514 serves as the catalytic Proton donor; for dehydratase activity. Residues 1629 to 1653 (AKDTERRPLDIPTRAQRQPNSPPTG) are disordered. Positions 1649 to 1726 (SPPTGTLGRI…ELKEFLGADQ (78 aa)) constitute a Carrier 1 domain. Residue S1686 is modified to O-(pantetheine 4'-phosphoryl)serine. The interval 1729 to 1765 (DDAVACESSNGQHTPQTSDKGSGTLAAQKPDDDTGSD) is disordered. Positions 1735–1749 (ESSNGQHTPQTSDKG) are enriched in polar residues. Residues 1765–1839 (DTTLHRVCAI…SLQKALCGTE (75 aa)) enclose the Carrier 2 domain. O-(pantetheine 4'-phosphoryl)serine is present on S1799. The thioesterase (TE) domain stretch occupies residues 1875–2151 (ASPPHATSIL…MAEMGDLIGE (277 aa)). Catalysis depends on S1981, which acts as the For thioesterase activity.

Functionally, polyketide synthase; part of the Pks2 gene cluster that mediates the formation of infectious structures (appressoria), enabling these fungi to kill insects faster. The product of the Pks2 gene cluster is different from the one of Pks1 and has still not been identified. The polypeptide is Polyketide synthase 2 (Metarhizium guizhouense (strain ARSEF 977)).